A 236-amino-acid polypeptide reads, in one-letter code: Syntaxin-8 (236 aa).

Over 1-215 (MAPDPWFSTY…LVDRKSTSCG (215 aa)) the chain is Cytoplasmic. A coiled-coil region spans residues 42–65 (LTIRTLLKNLKVKIDLLKDLLLRA). Residues 145-207 (QKIIQEQDAG…RTEARRVTLV (63 aa)) enclose the t-SNARE coiled-coil homology domain. Ser160 is modified (phosphoserine). The chain crosses the membrane as a helical; Anchor for type IV membrane protein span at residues 216–232 (MIMVILLLLVAIVVVAV). At 233–236 (WPTN) the chain is on the vesicular side.

Belongs to the syntaxin family. Forms a SNARE complex with STX7, VTI1B and VAMP8 which functions in the homotypic fusion of late endosomes. Part of the SNARE core complex containing STX7, VAMP8 and VTI1B. Interacts with VAMP8. Interacts with HECTD3. Interacts with TPC1. In terms of processing, ubiquitinated by HECTD3.

It localises to the membrane. Its function is as follows. Vesicle trafficking protein that functions in the early secretory pathway, possibly by mediating retrograde transport from cis-Golgi membranes to the ER. This chain is Syntaxin-8 (Stx8), found in Mus musculus (Mouse).